The sequence spans 375 residues: MFISEIQLKNYRNYEKLELSFEDKVNVIIGENAQGKTNLMEAIYVLAMAKSHRTSNDRELIRWDEDFGQIKGKLQKRNSSLSLELNISKKGKKAKLNQLEQQKLSQYIGVMNVVMFAPEDLNLVKGSPQVRRRFLDMELGQIAPVYLYELSQYQKVLTQRNHLLKKMQGNSKNEETMLDVFTLQLIEHGAKILQKRFEFLHLLQEWAAPIHRGISRGLEELEIVYKPSVDVSESMDLSKIKEVYYESFQSVKQREIFRGTTLLGPHRDDLQFFVNSKNVQVFGSQGQQRTTALSLKLAEIELIYSEVKEYPILLLDDVLSELDDYRQSHLLNTIQGKVQTFVTTTSVDGIEHETLKEAKTIHVTNGTVDCEIDRE.

30–37 provides a ligand contact to ATP; sequence GENAQGKT.

The protein belongs to the RecF family.

It localises to the cytoplasm. The RecF protein is involved in DNA metabolism; it is required for DNA replication and normal SOS inducibility. RecF binds preferentially to single-stranded, linear DNA. It also seems to bind ATP. This chain is DNA replication and repair protein RecF, found in Bacillus cereus (strain ZK / E33L).